A 996-amino-acid chain; its full sequence is Conserved oligomeric Golgi complex subunit 7 (996 aa).

Disordered stretches follow at residues 533 to 571, 828 to 867, and 950 to 974; these read TPSSINGEVDPVKKLTNSHTRSHSRSGSGSGNSNSNSVG, QQQEQQEKEQQQEKEQQDADQDININTNNNNENDENDEDD, and QLHNNNNNNNNNNGNSNNNNNNTNN. The span at 557 to 571 shows a compositional bias: low complexity; it reads RSGSGSGNSNSNSVG. Positions 828–844 are enriched in basic and acidic residues; the sequence is QQQEQQEKEQQQEKEQQ. 2 stretches are compositionally biased toward low complexity: residues 849–858 and 953–974; these read DININTNNNN and NNNNNNNNNNGNSNNNNNNTNN.

Belongs to the COG7 family. Component of the conserved oligomeric Golgi complex which is composed of eight different subunits and is required for normal Golgi morphology and localization.

The protein localises to the golgi apparatus membrane. In terms of biological role, required for normal Golgi function. In Dictyostelium discoideum (Social amoeba), this protein is Conserved oligomeric Golgi complex subunit 7 (cog7).